Reading from the N-terminus, the 158-residue chain is Large ribosomal subunit protein eL20z (158 aa).

It belongs to the eukaryotic ribosomal protein eL20 family.

In Arabidopsis thaliana (Mouse-ear cress), this protein is Large ribosomal subunit protein eL20z (RPL18A1).